The following is a 278-amino-acid chain: Release factor glutamine methyltransferase (278 aa).

S-adenosyl-L-methionine is bound by residues 117–121, Asp140, and Asn184; that span reads GTGSG. Residue 184 to 187 participates in substrate binding; that stretch reads NPPY.

The protein belongs to the protein N5-glutamine methyltransferase family. PrmC subfamily.

It catalyses the reaction L-glutaminyl-[peptide chain release factor] + S-adenosyl-L-methionine = N(5)-methyl-L-glutaminyl-[peptide chain release factor] + S-adenosyl-L-homocysteine + H(+). Its function is as follows. Methylates the class 1 translation termination release factors RF1/PrfA and RF2/PrfB on the glutamine residue of the universally conserved GGQ motif. The polypeptide is Release factor glutamine methyltransferase (Bacteroides thetaiotaomicron (strain ATCC 29148 / DSM 2079 / JCM 5827 / CCUG 10774 / NCTC 10582 / VPI-5482 / E50)).